Here is a 104-residue protein sequence, read N- to C-terminus: Integration host factor subunit beta (104 aa).

Positions 83 to 95 are enriched in basic and acidic residues; the sequence is GKEMRERLNRDSG. Residues 83–104 are disordered; that stretch reads GKEMRERLNRDSGDDAPTSDTA.

It belongs to the bacterial histone-like protein family. As to quaternary structure, heterodimer of an alpha and a beta chain.

Its function is as follows. This protein is one of the two subunits of integration host factor, a specific DNA-binding protein that functions in genetic recombination as well as in transcriptional and translational control. This chain is Integration host factor subunit beta, found in Rhodopseudomonas palustris (strain ATCC BAA-98 / CGA009).